Reading from the N-terminus, the 402-residue chain is Multidrug resistance protein MdtH (402 aa).

11 helical membrane passes run 13-33 (YFLL…FPLI), 34-54 (SIRF…ALGL), 99-116 (PWVL…GTLF), 139-159 (LLMM…SWLL), 165-185 (LVCG…AWLL), 214-234 (VLTL…LPVM), 243-263 (AAVK…LYPL), 277-297 (LMAG…ASNL), 300-320 (LFTL…ARET), 340-360 (LGLA…FDAG), and 368-388 (LPWA…WWQF).

This sequence belongs to the major facilitator superfamily. DHA1 family. MdtH (TC 2.A.1.2.21) subfamily.

The protein localises to the cell inner membrane. The chain is Multidrug resistance protein MdtH from Cronobacter sakazakii (strain ATCC BAA-894) (Enterobacter sakazakii).